The primary structure comprises 612 residues: Sulfite reductase [NADPH] flavoprotein alpha-component (612 aa).

The 139-residue stretch at 64–202 (VTLISASQTG…QAQQWRQQVV (139 aa)) folds into the Flavodoxin-like domain. FMN is bound by residues 70-75 (SQTGNA), 117-120 (STQG), and 153-162 (LGDTSYEHFC). Positions 247-461 (TAPLTAQLSV…IEHNDNFRLP (215 aa)) constitute an FAD-binding FR-type domain. Residues Thr-335, Lys-369, 399–402 (RLYS), 417–419 (TVG), Tyr-423, and 432–435 (GGAS) contribute to the FAD site. Residues 532-533 (SR), 538-542 (KIYVQ), and Asp-574 each bind NADP(+). Tyr-612 is an FAD binding site.

The protein belongs to the NADPH-dependent sulphite reductase flavoprotein subunit CysJ family. It in the N-terminal section; belongs to the flavodoxin family. This sequence in the C-terminal section; belongs to the flavoprotein pyridine nucleotide cytochrome reductase family. Alpha(8)-beta(8). The alpha component is a flavoprotein, the beta component is a hemoprotein. The cofactor is FAD. It depends on FMN as a cofactor.

The enzyme catalyses hydrogen sulfide + 3 NADP(+) + 3 H2O = sulfite + 3 NADPH + 4 H(+). Its pathway is sulfur metabolism; hydrogen sulfide biosynthesis; hydrogen sulfide from sulfite (NADPH route): step 1/1. Component of the sulfite reductase complex that catalyzes the 6-electron reduction of sulfite to sulfide. This is one of several activities required for the biosynthesis of L-cysteine from sulfate. The flavoprotein component catalyzes the electron flow from NADPH -&gt; FAD -&gt; FMN to the hemoprotein component. In Yersinia pestis bv. Antiqua (strain Nepal516), this protein is Sulfite reductase [NADPH] flavoprotein alpha-component.